The following is a 377-amino-acid chain: Cobalt-precorrin-5B C(1)-methyltransferase (377 aa).

The interval 1–21 is disordered; it reads MNPVRQPYDLAAPAPNGMRRG.

It belongs to the CbiD family.

It catalyses the reaction Co-precorrin-5B + S-adenosyl-L-methionine = Co-precorrin-6A + S-adenosyl-L-homocysteine. It participates in cofactor biosynthesis; adenosylcobalamin biosynthesis; cob(II)yrinate a,c-diamide from sirohydrochlorin (anaerobic route): step 6/10. Functionally, catalyzes the methylation of C-1 in cobalt-precorrin-5B to form cobalt-precorrin-6A. The polypeptide is Cobalt-precorrin-5B C(1)-methyltransferase (Chromobacterium violaceum (strain ATCC 12472 / DSM 30191 / JCM 1249 / CCUG 213 / NBRC 12614 / NCIMB 9131 / NCTC 9757 / MK)).